The primary structure comprises 144 residues: Large ribosomal subunit protein uL15 (144 aa).

A disordered region spans residues 1-45 (MNLNTLSPDPGSRPSRRRVGRGIGSGLGKTCGKGHKGQKSRAGGY). Residues 21–31 (RGIGSGLGKTC) are compositionally biased toward gly residues.

Belongs to the universal ribosomal protein uL15 family. Part of the 50S ribosomal subunit.

Functionally, binds to the 23S rRNA. This is Large ribosomal subunit protein uL15 from Legionella pneumophila (strain Paris).